The chain runs to 256 residues: uncharacterized protein (256 aa).

Positions 1–22 (MGYLKRIGMCISLLIVIIFVTS) are cleaved as a signal peptide. Cysteine 23 carries N-palmitoyl cysteine lipidation. Cysteine 23 carries S-diacylglycerol cysteine lipidation.

It belongs to the staphylococcal tandem lipoprotein family.

Its subcellular location is the cell membrane. This is an uncharacterized protein from Staphylococcus aureus (strain MRSA252).